We begin with the raw amino-acid sequence, 1227 residues long: Protein U7 (1227 aa).

It belongs to the herpesviridae US22 family.

In Homo sapiens (Human), this protein is Protein U7 (U7/U5).